We begin with the raw amino-acid sequence, 136 residues long: Small ribosomal subunit protein uS11 (136 aa).

2 disordered regions span residues 1-20 (MAQRRSSQTTKKVKRKNVTN) and 115-136 (VTPQAHNGTRPPKRVLKREKAR). Residues 125–136 (PPKRVLKREKAR) show a composition bias toward basic residues.

Belongs to the universal ribosomal protein uS11 family. Part of the 30S ribosomal subunit. Interacts with proteins S7 and S18. Binds to IF-3.

Its function is as follows. Located on the platform of the 30S subunit, it bridges several disparate RNA helices of the 16S rRNA. Forms part of the Shine-Dalgarno cleft in the 70S ribosome. The protein is Small ribosomal subunit protein uS11 of Mycoplasmopsis pulmonis (strain UAB CTIP) (Mycoplasma pulmonis).